The sequence spans 471 residues: UDP-N-acetylmuramate--L-alanine ligase (471 aa).

114–120 is a binding site for ATP; the sequence is GTHGKTT.

It belongs to the MurCDEF family.

The protein resides in the cytoplasm. The catalysed reaction is UDP-N-acetyl-alpha-D-muramate + L-alanine + ATP = UDP-N-acetyl-alpha-D-muramoyl-L-alanine + ADP + phosphate + H(+). Its pathway is cell wall biogenesis; peptidoglycan biosynthesis. Functionally, cell wall formation. This Rhizobium meliloti (strain 1021) (Ensifer meliloti) protein is UDP-N-acetylmuramate--L-alanine ligase.